The primary structure comprises 253 residues: Glutamate racemase (253 aa).

Residues 7–8 and 39–40 contribute to the substrate site; these read DS and YG. Cys70 acts as the Proton donor/acceptor in catalysis. A substrate-binding site is contributed by 71-72; that stretch reads NS. The Proton donor/acceptor role is filled by Cys179. Residue 180–181 coordinates substrate; that stretch reads TH.

It belongs to the aspartate/glutamate racemases family.

The catalysed reaction is L-glutamate = D-glutamate. It functions in the pathway cell wall biogenesis; peptidoglycan biosynthesis. In terms of biological role, provides the (R)-glutamate required for cell wall biosynthesis. This is Glutamate racemase from Nitratiruptor sp. (strain SB155-2).